The primary structure comprises 299 residues: Ribosomal protein L11 methyltransferase (299 aa).

S-adenosyl-L-methionine-binding residues include T144, G165, D187, and N229.

Belongs to the methyltransferase superfamily. PrmA family.

Its subcellular location is the cytoplasm. It carries out the reaction L-lysyl-[protein] + 3 S-adenosyl-L-methionine = N(6),N(6),N(6)-trimethyl-L-lysyl-[protein] + 3 S-adenosyl-L-homocysteine + 3 H(+). Functionally, methylates ribosomal protein L11. The protein is Ribosomal protein L11 methyltransferase of Teredinibacter turnerae (strain ATCC 39867 / T7901).